The primary structure comprises 360 residues: Phospho-N-acetylmuramoyl-pentapeptide-transferase (360 aa).

The next 10 membrane-spanning stretches (helical) occupy residues 26–46, 73–93, 97–117, 135–155, 168–188, 199–219, 236–256, 263–283, 288–308, and 338–358; these read AILG…ILIK, TMGG…WGDL, YVLV…IDDY, ALQS…STMV, IMPQ…VGAS, GLAI…AYLS, AGEL…FLWF, VFMG…IAIL, ILLV…ILQV, and VIVR…ATLK.

The protein belongs to the glycosyltransferase 4 family. MraY subfamily. The cofactor is Mg(2+).

Its subcellular location is the cell inner membrane. The catalysed reaction is UDP-N-acetyl-alpha-D-muramoyl-L-alanyl-gamma-D-glutamyl-meso-2,6-diaminopimeloyl-D-alanyl-D-alanine + di-trans,octa-cis-undecaprenyl phosphate = di-trans,octa-cis-undecaprenyl diphospho-N-acetyl-alpha-D-muramoyl-L-alanyl-D-glutamyl-meso-2,6-diaminopimeloyl-D-alanyl-D-alanine + UMP. The protein operates within cell wall biogenesis; peptidoglycan biosynthesis. Functionally, catalyzes the initial step of the lipid cycle reactions in the biosynthesis of the cell wall peptidoglycan: transfers peptidoglycan precursor phospho-MurNAc-pentapeptide from UDP-MurNAc-pentapeptide onto the lipid carrier undecaprenyl phosphate, yielding undecaprenyl-pyrophosphoryl-MurNAc-pentapeptide, known as lipid I. This Shewanella frigidimarina (strain NCIMB 400) protein is Phospho-N-acetylmuramoyl-pentapeptide-transferase.